A 283-amino-acid polypeptide reads, in one-letter code: MTAIIERAPAKINLGLDIQGKRPDGYHDLSMVLVSVDLCDYITVDHLEEDRILLTSNCPRLPINEHNDVYKAAYLLKERFQISTGVSIFLDKRVPVCAGMGGGSSDAAAAIRALNQLWQLKLSPRQMIDIGMQIGSDVPYCLFAGCAQVTGKGEVVKPINGRLSSWVVLVKPEFGISTRTIFWDIDCETISRVPIEDLVSAIEAGDYQRLLATMGNSLEDISIAKRPFIQKVKDKMLQSGADIALMTGSGPTVFALCQTEKQANRVVNSLKGFCKEVYKVRTL.

K11 is a catalytic residue. 95 to 105 (PVCAGMGGGSS) contributes to the ATP binding site. Residue D137 is part of the active site.

Belongs to the GHMP kinase family. IspE subfamily.

It catalyses the reaction 4-CDP-2-C-methyl-D-erythritol + ATP = 4-CDP-2-C-methyl-D-erythritol 2-phosphate + ADP + H(+). Catalyzes the phosphorylation of the position 2 hydroxy group of 4-diphosphocytidyl-2C-methyl-D-erythritol. The sequence is that of Putative 4-diphosphocytidyl-2-C-methyl-D-erythritol kinase from Streptococcus equi subsp. equi (strain 4047).